A 261-amino-acid chain; its full sequence is Cytochrome c oxidase subunit 3 (261 aa).

Topologically, residues 1-15 (MAHQAHAYHMVDPSP) are mitochondrial matrix. The chain crosses the membrane as a helical span at residues 16–34 (WPLTGAIAALLLTSGTAVW). Residues 35–40 (FHFHSL) lie on the Mitochondrial intermembrane side of the membrane. A helical membrane pass occupies residues 41–66 (TLLTLGNILLLLTMYQWWRDIIREGT). Residues 67-72 (FQGHHT) lie on the Mitochondrial matrix side of the membrane. A helical transmembrane segment spans residues 73–105 (PPVQKGLRYGMILFITSEVFFFLGFFWAFYHAS). Over 106-128 (LAPTPELGGCWPPAGITTLDPFE) the chain is Mitochondrial intermembrane. Residues 129 to 152 (VPLLNTAVLLASGVTVTWAHHSIM) form a helical membrane-spanning segment. Over 153–155 (EGE) the chain is Mitochondrial matrix. Residues 156–183 (RKQTIQALTLTILLGFYFTFLQGMEYYE) traverse the membrane as a helical segment. At 184 to 190 (APFTIAD) the chain is on the mitochondrial intermembrane side. Residues 191–223 (GVYGSTFFVATGFHGLHVIIGSTFLAVCLLRQV) traverse the membrane as a helical segment. The Mitochondrial matrix portion of the chain corresponds to 224–232 (QYHFTSEHH). The helical transmembrane segment at 233–256 (FGFEAAAWYWHFVDVVWLFLYVSI) threads the bilayer. The Mitochondrial intermembrane segment spans residues 257–261 (YWWGS).

Belongs to the cytochrome c oxidase subunit 3 family. Component of the cytochrome c oxidase (complex IV, CIV), a multisubunit enzyme composed of 14 subunits. The complex is composed of a catalytic core of 3 subunits MT-CO1, MT-CO2 and MT-CO3, encoded in the mitochondrial DNA, and 11 supernumerary subunits COX4I, COX5A, COX5B, COX6A, COX6B, COX6C, COX7A, COX7B, COX7C, COX8 and NDUFA4, which are encoded in the nuclear genome. The complex exists as a monomer or a dimer and forms supercomplexes (SCs) in the inner mitochondrial membrane with NADH-ubiquinone oxidoreductase (complex I, CI) and ubiquinol-cytochrome c oxidoreductase (cytochrome b-c1 complex, complex III, CIII), resulting in different assemblies (supercomplex SCI(1)III(2)IV(1) and megacomplex MCI(2)III(2)IV(2)).

The protein localises to the mitochondrion inner membrane. The catalysed reaction is 4 Fe(II)-[cytochrome c] + O2 + 8 H(+)(in) = 4 Fe(III)-[cytochrome c] + 2 H2O + 4 H(+)(out). In terms of biological role, component of the cytochrome c oxidase, the last enzyme in the mitochondrial electron transport chain which drives oxidative phosphorylation. The respiratory chain contains 3 multisubunit complexes succinate dehydrogenase (complex II, CII), ubiquinol-cytochrome c oxidoreductase (cytochrome b-c1 complex, complex III, CIII) and cytochrome c oxidase (complex IV, CIV), that cooperate to transfer electrons derived from NADH and succinate to molecular oxygen, creating an electrochemical gradient over the inner membrane that drives transmembrane transport and the ATP synthase. Cytochrome c oxidase is the component of the respiratory chain that catalyzes the reduction of oxygen to water. Electrons originating from reduced cytochrome c in the intermembrane space (IMS) are transferred via the dinuclear copper A center (CU(A)) of subunit 2 and heme A of subunit 1 to the active site in subunit 1, a binuclear center (BNC) formed by heme A3 and copper B (CU(B)). The BNC reduces molecular oxygen to 2 water molecules using 4 electrons from cytochrome c in the IMS and 4 protons from the mitochondrial matrix. The protein is Cytochrome c oxidase subunit 3 (mt-co3) of Oncorhynchus mykiss (Rainbow trout).